Consider the following 132-residue polypeptide: ATP synthase epsilon chain (132 aa).

This sequence belongs to the ATPase epsilon chain family. In terms of assembly, F-type ATPases have 2 components, CF(1) - the catalytic core - and CF(0) - the membrane proton channel. CF(1) has five subunits: alpha(3), beta(3), gamma(1), delta(1), epsilon(1). CF(0) has three main subunits: a, b and c.

The protein resides in the cell membrane. Its function is as follows. Produces ATP from ADP in the presence of a proton gradient across the membrane. The polypeptide is ATP synthase epsilon chain (Desulfitobacterium hafniense (strain Y51)).